Reading from the N-terminus, the 121-residue chain is Large ribosomal subunit protein uL14c (121 aa).

This sequence belongs to the universal ribosomal protein uL14 family. In terms of assembly, part of the 50S ribosomal subunit.

It localises to the plastid. The protein resides in the apicoplast. Its function is as follows. Binds to 23S rRNA. The chain is Large ribosomal subunit protein uL14c (rpl14) from Toxoplasma gondii.